The sequence spans 287 residues: Pyridoxal kinase PdxY (287 aa).

Residues Ser-9 and 44–45 (TQ) contribute to the substrate site. Residues Asp-111, Ala-143, Glu-148, Lys-181, and 208 to 211 (RPLV) each bind ATP. Asp-223 is a binding site for substrate.

Belongs to the pyridoxine kinase family. PdxY subfamily. Homodimer. Mg(2+) serves as cofactor.

The catalysed reaction is pyridoxal + ATP = pyridoxal 5'-phosphate + ADP + H(+). It participates in cofactor metabolism; pyridoxal 5'-phosphate salvage; pyridoxal 5'-phosphate from pyridoxal: step 1/1. Functionally, pyridoxal kinase involved in the salvage pathway of pyridoxal 5'-phosphate (PLP). Catalyzes the phosphorylation of pyridoxal to PLP. This Photorhabdus laumondii subsp. laumondii (strain DSM 15139 / CIP 105565 / TT01) (Photorhabdus luminescens subsp. laumondii) protein is Pyridoxal kinase PdxY.